The following is a 135-amino-acid chain: Small ribosomal subunit protein bS16 (135 aa).

Residues 105 to 120 (DEKKKPVLKPKTEKAA) are compositionally biased toward basic and acidic residues. Residues 105-135 (DEKKKPVLKPKTEKAAPEAAAPEAEATEEQA) form a disordered region.

Belongs to the bacterial ribosomal protein bS16 family.

This chain is Small ribosomal subunit protein bS16, found in Clavibacter sepedonicus (Clavibacter michiganensis subsp. sepedonicus).